The following is a 635-amino-acid chain: Threonine--tRNA ligase (635 aa).

Residues 1-61 form the TGS domain; that stretch reads MVSIRLPDGS…DHDASLAIVT (61 aa). The interval 242-533 is catalytic; sequence DHRKLGKQLD…LIEHHAGAMP (292 aa). Positions 333, 384, and 510 each coordinate Zn(2+).

The protein belongs to the class-II aminoacyl-tRNA synthetase family. In terms of assembly, homodimer. Zn(2+) is required as a cofactor.

Its subcellular location is the cytoplasm. It carries out the reaction tRNA(Thr) + L-threonine + ATP = L-threonyl-tRNA(Thr) + AMP + diphosphate + H(+). Catalyzes the attachment of threonine to tRNA(Thr) in a two-step reaction: L-threonine is first activated by ATP to form Thr-AMP and then transferred to the acceptor end of tRNA(Thr). Also edits incorrectly charged L-seryl-tRNA(Thr). This is Threonine--tRNA ligase from Burkholderia multivorans (strain ATCC 17616 / 249).